Consider the following 199-residue polypeptide: Large ribosomal subunit protein bL9 (199 aa).

The tract at residues 153–199 is disordered; the sequence is KPVKASEKKGRRPRRDEEASDEQILAEENSVTEEAVSEEIQNSESEN.

The protein belongs to the bacterial ribosomal protein bL9 family.

Binds to the 23S rRNA. This chain is Large ribosomal subunit protein bL9, found in Treponema denticola (strain ATCC 35405 / DSM 14222 / CIP 103919 / JCM 8153 / KCTC 15104).